Here is a 1199-residue protein sequence, read N- to C-terminus: DNA-directed RNA polymerase subunit beta' (1199 aa).

Zn(2+) is bound by residues Cys60, Cys62, Cys75, and Cys78. Residues Asp449, Asp451, and Asp453 each coordinate Mg(2+). Zn(2+) is bound by residues Cys818, Cys892, Cys899, and Cys902.

The protein belongs to the RNA polymerase beta' chain family. In terms of assembly, the RNAP catalytic core consists of 2 alpha, 1 beta, 1 beta' and 1 omega subunit. When a sigma factor is associated with the core the holoenzyme is formed, which can initiate transcription. Mg(2+) serves as cofactor. It depends on Zn(2+) as a cofactor.

The catalysed reaction is RNA(n) + a ribonucleoside 5'-triphosphate = RNA(n+1) + diphosphate. Functionally, DNA-dependent RNA polymerase catalyzes the transcription of DNA into RNA using the four ribonucleoside triphosphates as substrates. The sequence is that of DNA-directed RNA polymerase subunit beta' from Bacillus licheniformis (strain ATCC 14580 / DSM 13 / JCM 2505 / CCUG 7422 / NBRC 12200 / NCIMB 9375 / NCTC 10341 / NRRL NRS-1264 / Gibson 46).